A 153-amino-acid chain; its full sequence is uncharacterized protein (153 aa).

Residues M1–G88 are disordered.

This is an uncharacterized protein from Epstein-Barr virus (strain P3HR-1) (HHV-4).